The chain runs to 177 residues: Keratin-associated protein 1-1 (177 aa).

It belongs to the KRTAP type 1 family. In terms of assembly, interacts with hair keratins. As to expression, expressed in the middle/upper portions of the hair cortex, in the region termed the keratogenous zone.

Functionally, in the hair cortex, hair keratin intermediate filaments are embedded in an interfilamentous matrix, consisting of hair keratin-associated proteins (KRTAP), which are essential for the formation of a rigid and resistant hair shaft through their extensive disulfide bond cross-linking with abundant cysteine residues of hair keratins. The matrix proteins include the high-sulfur and high-glycine-tyrosine keratins. This Homo sapiens (Human) protein is Keratin-associated protein 1-1 (KRTAP1-1).